A 38-amino-acid polypeptide reads, in one-letter code: Alpha-2-macroglobulin homolog (38 aa).

Positions 27 to 30 (CGEQ) form a cross-link, isoglutamyl cysteine thioester (Cys-Gln).

The protein belongs to the protease inhibitor I39 (alpha-2-macroglobulin) family. In terms of assembly, homodimer; disulfide-linked. As to expression, hemolymph.

The protein localises to the secreted. Is able to inhibit all four classes of proteinases by a unique 'trapping' mechanism. This protein has a peptide stretch, called the 'bait region' which contains specific cleavage sites for different proteinases. When a proteinase cleaves the bait region, a conformational change is induced in the protein which traps the proteinase. The entrapped enzyme remains active against low molecular weight substrates (activity against high molecular weight substrates is greatly reduced). Following cleavage in the bait region a thioester bond is hydrolyzed and mediates the covalent binding of the protein to the proteinase. The protein is Alpha-2-macroglobulin homolog of Homarus americanus (American lobster).